The primary structure comprises 478 residues: Putrescine oxidase (478 aa).

15 to 70 is an FAD binding site; that stretch reads RDVVVVGAGPAGLMAARTLVAAGRTVAVLEARDRVGGRTWSKTVDGAFLEIGGQWI.

It belongs to the flavin monoamine oxidase family. Requires FAD as cofactor.

The catalysed reaction is putrescine + O2 + H2O = 4-aminobutanal + H2O2 + NH4(+). The chain is Putrescine oxidase (puo) from Kocuria rosea (Deinococcus erythromyxa).